The sequence spans 481 residues: ATP synthase subunit beta, chloroplastic (481 aa).

163–170 is an ATP binding site; the sequence is GGAGVGKT.

The protein belongs to the ATPase alpha/beta chains family. F-type ATPases have 2 components, CF(1) - the catalytic core - and CF(0) - the membrane proton channel. CF(1) has five subunits: alpha(3), beta(3), gamma(1), delta(1), epsilon(1). CF(0) has four main subunits: a(1), b(1), b'(1) and c(9-12).

The protein localises to the plastid. The protein resides in the chloroplast thylakoid membrane. It catalyses the reaction ATP + H2O + 4 H(+)(in) = ADP + phosphate + 5 H(+)(out). In terms of biological role, produces ATP from ADP in the presence of a proton gradient across the membrane. The catalytic sites are hosted primarily by the beta subunits. This is ATP synthase subunit beta, chloroplastic from Tupiella akineta (Green alga).